A 301-amino-acid chain; its full sequence is NADH-cytochrome b5 reductase 3 (301 aa).

The N-myristoyl glycine moiety is linked to residue G2. An FAD-binding FR-type domain is found at 40-152; sequence DIKYPLRLID…RGPNGLLVYQ (113 aa). An N6-acetyllysine modification is found at K42. Phosphotyrosine is present on Y43. K50 is modified (N6-acetyllysine). Positions 92, 93, 94, 109, 111, and 114 each coordinate FAD. K120 is subject to N6-acetyllysine. K126, M127, S128, and T185 together coordinate FAD.

This sequence belongs to the flavoprotein pyridine nucleotide cytochrome reductase family. In terms of assembly, component of a complex composed of cytochrome b5, NADH-cytochrome b5 reductase (CYB5R3) and MTARC2. Interacts with MTLN; the interaction is required to maintain cellular lipid composition and leads to stimulation of mitochondrial respiratory complex I activity. FAD is required as a cofactor. Post-translationally, myristoylated. In terms of tissue distribution, ubiquitously expressed. As to expression, expressed only in erythroid tissues, reticulocytes and liver.

It localises to the endoplasmic reticulum membrane. Its subcellular location is the mitochondrion outer membrane. It is found in the cytoplasm. The catalysed reaction is 2 Fe(III)-[cytochrome b5] + NADH = 2 Fe(II)-[cytochrome b5] + NAD(+) + H(+). Functionally, catalyzes the reduction of two molecules of cytochrome b5 using NADH as the electron donor. The polypeptide is NADH-cytochrome b5 reductase 3 (Rattus norvegicus (Rat)).